We begin with the raw amino-acid sequence, 340 residues long: Short-chain dehydrogenase/reductase ffsI (340 aa).

Residues leucine 46, arginine 71, aspartate 96, asparagine 123, tyrosine 211, and lysine 215 each contribute to the NADP(+) site. Tyrosine 211 acts as the Proton acceptor in catalysis. Lysine 215 functions as the Lowers pKa of active site Tyr in the catalytic mechanism.

It belongs to the short-chain dehydrogenases/reductases (SDR) family.

It functions in the pathway mycotoxin biosynthesis. In terms of biological role, short-chain dehydrogenase/reductase; part of the gene cluster that mediates the biosynthesis of the cytotoxic leucine-containing cytochalasans, including aspochalasin C, aspochalasin E, TMC-169, flavichalasine F, aspergillin PZ, aspochalasin M and flavichalasine G. The first step in the pathway is catalyzed by the hybrid PKS-NRPS ffsA that utilizes 8 units of malonyl-CoA to iteratively assemble the octaketide chain before addition of L-leucine by the C-terminal NRPS modules. Because ffsA lacks a designated enoylreductase (ER) domain, the required activity is provided the enoyl reductase fssC. The methyltransferase (MT) domain of ffsA catalyzes the alpha-methylation at C10 and C14 using S-adenosyl-L-methionine as the methyl-donating cosubstrate. Reduction by the hydrolyase ffsE, followed by dehydration and intra-molecular Diels-Alder cyclization by the Diels-Alderase ffsF then yield the required isoindolone-fused macrocycle. A number of oxidative steps catalyzed by the tailoring cytochrome P450 monooxygenase ffsD, the FAD-linked oxidoreductase ffsJ and the short-chain dehydrogenase/reductase ffsI, are further required to afford the final products. This chain is Short-chain dehydrogenase/reductase ffsI, found in Aspergillus flavipes.